Consider the following 217-residue polypeptide: UPF0502 protein swp_3027 (217 aa).

This sequence belongs to the UPF0502 family.

This chain is UPF0502 protein swp_3027, found in Shewanella piezotolerans (strain WP3 / JCM 13877).